The chain runs to 264 residues: 3-methyl-2-oxobutanoate hydroxymethyltransferase (264 aa).

Positions 45 and 84 each coordinate Mg(2+). 3-methyl-2-oxobutanoate is bound by residues 45–46 (DS), D84, and K112. E114 contacts Mg(2+). The Proton acceptor role is filled by E181.

It belongs to the PanB family. Homodecamer; pentamer of dimers. Mg(2+) serves as cofactor.

It localises to the cytoplasm. The enzyme catalyses 3-methyl-2-oxobutanoate + (6R)-5,10-methylene-5,6,7,8-tetrahydrofolate + H2O = 2-dehydropantoate + (6S)-5,6,7,8-tetrahydrofolate. Its pathway is cofactor biosynthesis; (R)-pantothenate biosynthesis; (R)-pantoate from 3-methyl-2-oxobutanoate: step 1/2. Catalyzes the reversible reaction in which hydroxymethyl group from 5,10-methylenetetrahydrofolate is transferred onto alpha-ketoisovalerate to form ketopantoate. This Shewanella frigidimarina (strain NCIMB 400) protein is 3-methyl-2-oxobutanoate hydroxymethyltransferase.